The following is a 216-amino-acid chain: Uracil phosphoribosyltransferase (216 aa).

5-phospho-alpha-D-ribose 1-diphosphate contacts are provided by residues R85, R110, and 135-143 (DPMVATGYS). Uracil contacts are provided by residues I200 and 205-207 (GDA). Residue D206 participates in 5-phospho-alpha-D-ribose 1-diphosphate binding.

It belongs to the UPRTase family. Mg(2+) serves as cofactor.

The enzyme catalyses UMP + diphosphate = 5-phospho-alpha-D-ribose 1-diphosphate + uracil. It functions in the pathway pyrimidine metabolism; UMP biosynthesis via salvage pathway; UMP from uracil: step 1/1. Allosterically activated by GTP. Catalyzes the conversion of uracil and 5-phospho-alpha-D-ribose 1-diphosphate (PRPP) to UMP and diphosphate. The protein is Uracil phosphoribosyltransferase of Burkholderia lata (strain ATCC 17760 / DSM 23089 / LMG 22485 / NCIMB 9086 / R18194 / 383).